The following is a 63-amino-acid chain: LECHRRGSFISDGKITCSAKKTFCCKMYEKIFGIYWYGCAKTYTEKNTWNVYSKCCTTNLCNT.

Intrachain disulfides connect cysteine 3–cysteine 24, cysteine 17–cysteine 39, cysteine 25–cysteine 55, and cysteine 56–cysteine 61.

Contains 4 disulfide bonds. In terms of tissue distribution, expressed by the venom gland.

It localises to the secreted. Functionally, activates bacterial pH-gated potassium channel KcsA by binding to its extracellular domain, probably at a site different from channel inhibitors. Increases both mean open time and open probability of KscA. The protein is Toxin Tx7335 of Dendroaspis angusticeps (Eastern green mamba).